Reading from the N-terminus, the 363-residue chain is UDP-N-acetylglucosamine--N-acetylmuramyl-(pentapeptide) pyrophosphoryl-undecaprenol N-acetylglucosamine transferase (363 aa).

UDP-N-acetyl-alpha-D-glucosamine contacts are provided by residues 15–17, Asn-127, Arg-169, Ser-197, Ile-251, 270–275, and Gln-296; these read TGG and ALTVSE.

It belongs to the glycosyltransferase 28 family. MurG subfamily.

It localises to the cell inner membrane. The catalysed reaction is di-trans,octa-cis-undecaprenyl diphospho-N-acetyl-alpha-D-muramoyl-L-alanyl-D-glutamyl-meso-2,6-diaminopimeloyl-D-alanyl-D-alanine + UDP-N-acetyl-alpha-D-glucosamine = di-trans,octa-cis-undecaprenyl diphospho-[N-acetyl-alpha-D-glucosaminyl-(1-&gt;4)]-N-acetyl-alpha-D-muramoyl-L-alanyl-D-glutamyl-meso-2,6-diaminopimeloyl-D-alanyl-D-alanine + UDP + H(+). The protein operates within cell wall biogenesis; peptidoglycan biosynthesis. Cell wall formation. Catalyzes the transfer of a GlcNAc subunit on undecaprenyl-pyrophosphoryl-MurNAc-pentapeptide (lipid intermediate I) to form undecaprenyl-pyrophosphoryl-MurNAc-(pentapeptide)GlcNAc (lipid intermediate II). This Dichelobacter nodosus (strain VCS1703A) protein is UDP-N-acetylglucosamine--N-acetylmuramyl-(pentapeptide) pyrophosphoryl-undecaprenol N-acetylglucosamine transferase.